A 128-amino-acid chain; its full sequence is uncharacterized protein (128 aa).

It is found in the mitochondrion. This is an uncharacterized protein from Schizosaccharomyces pombe (strain 972 / ATCC 24843) (Fission yeast).